A 538-amino-acid polypeptide reads, in one-letter code: CTP synthase (538 aa).

Residues 1–266 are amidoligase domain; the sequence is MKTKFIFVTG…DDQVVDKLNI (266 aa). Ser-14 is a CTP binding site. Ser-14 provides a ligand contact to UTP. Residues 15–20 and Asp-72 contribute to the ATP site; that span reads SIGKGL. Mg(2+) is bound by residues Asp-72 and Glu-140. CTP contacts are provided by residues 147–149, 187–192, and Lys-223; these read DIE and KTKPTQ. Residues 187–192 and Lys-223 contribute to the UTP site; that span reads KTKPTQ. In terms of domain architecture, Glutamine amidotransferase type-1 spans 292–534; sequence HIAIVGKYVN…IAAALEHRGK (243 aa). Gly-354 contacts L-glutamine. Cys-381 serves as the catalytic Nucleophile; for glutamine hydrolysis. L-glutamine is bound by residues 382 to 385, Glu-405, and Arg-462; that span reads LGMQ. Active-site residues include His-507 and Glu-509.

Belongs to the CTP synthase family. As to quaternary structure, homotetramer.

It catalyses the reaction UTP + L-glutamine + ATP + H2O = CTP + L-glutamate + ADP + phosphate + 2 H(+). The enzyme catalyses L-glutamine + H2O = L-glutamate + NH4(+). It carries out the reaction UTP + NH4(+) + ATP = CTP + ADP + phosphate + 2 H(+). The protein operates within pyrimidine metabolism; CTP biosynthesis via de novo pathway; CTP from UDP: step 2/2. With respect to regulation, allosterically activated by GTP, when glutamine is the substrate; GTP has no effect on the reaction when ammonia is the substrate. The allosteric effector GTP functions by stabilizing the protein conformation that binds the tetrahedral intermediate(s) formed during glutamine hydrolysis. Inhibited by the product CTP, via allosteric rather than competitive inhibition. Functionally, catalyzes the ATP-dependent amination of UTP to CTP with either L-glutamine or ammonia as the source of nitrogen. Regulates intracellular CTP levels through interactions with the four ribonucleotide triphosphates. This Geobacter metallireducens (strain ATCC 53774 / DSM 7210 / GS-15) protein is CTP synthase.